Reading from the N-terminus, the 130-residue chain is uncharacterized protein (130 aa).

The signal sequence occupies residues 1–18 (MVEVWWSLIGAAVPALIA).

This is an uncharacterized protein from Arabidopsis thaliana (Mouse-ear cress).